The primary structure comprises 198 residues: Recombination protein RecR (198 aa).

The C4-type zinc finger occupies 58–73 (CSVCGNYTDTDPCAIC). The 95-residue stretch at 81–175 (SLVCVVEEPK…KVTRIAHGIP (95 aa)) folds into the Toprim domain.

Belongs to the RecR family.

Functionally, may play a role in DNA repair. It seems to be involved in an RecBC-independent recombinational process of DNA repair. It may act with RecF and RecO. This Clostridium acetobutylicum (strain ATCC 824 / DSM 792 / JCM 1419 / IAM 19013 / LMG 5710 / NBRC 13948 / NRRL B-527 / VKM B-1787 / 2291 / W) protein is Recombination protein RecR.